The chain runs to 479 residues: Transmembrane protein 161A (479 aa).

The first 28 residues, 1 to 28 (MAVLGVQLVVTLLTATLMHRLAPHCSFA), serve as a signal peptide directing secretion. Over 29–98 (RWLLCNGSLF…LTTVDALVLR (70 aa)) the chain is Extracellular. Asn34 is a glycosylation site (N-linked (GlcNAc...) asparagine). A Phosphoserine modification is found at Ser69. A helical membrane pass occupies residues 99 to 119 (FFLEYQWFVDFAVYSGGVYLF). At 120-134 (TEAYYYMLGPAKETN) the chain is on the cytoplasmic side. A helical membrane pass occupies residues 135–155 (IAVFWCLLTVTFSIKMFLTVT). Over 156–166 (RLYFSAEEGGE) the chain is Extracellular. A helical transmembrane segment spans residues 167-187 (RSVCLTFAFLFLLLAMLVQVV). The Cytoplasmic portion of the chain corresponds to 188-224 (REETLELGLEPGLASMTQNLEPLLKKQGWDWALPVAK). A helical membrane pass occupies residues 225–245 (LAIRVGLAVVGSVLGAFLTFP). The Extracellular portion of the chain corresponds to 246–263 (GLRLAQTHRDALTMSEDR). A helical transmembrane segment spans residues 264-284 (PMLQFLLHTSFLSPLFILWLW). Over 285 to 304 (TKPIARDFLHQPPFGETRFS) the chain is Cytoplasmic. A helical transmembrane segment spans residues 305 to 325 (LLSDSAFDSGRLWLLVVLCLL). Topologically, residues 326–370 (RLAVTRPHLQAYLCLAKARVEQLRREAGRIEAREIQQRVVRVYCY) are extracellular. Residues 371-391 (VTVVSLQYLTPLILTLNCTLL) form a helical membrane-spanning segment. At 392-449 (LKTLGGYSWGLGPAPLLSPDPSSASAAPIGSGEDEVQQTAARIAGALGGLLTPLFLRG) the chain is on the cytoplasmic side. A helical transmembrane segment spans residues 450–470 (VLAYLIWWTAACQLLASLFGL). Residues 471-479 (YFHQHLAGS) are Extracellular-facing.

This sequence belongs to the TMEM161 family.

It localises to the membrane. Its function is as follows. May play a role in protection against oxidative stress. Overexpression leads to reduced levels of oxidant-induced DNA damage and apoptosis. The sequence is that of Transmembrane protein 161A (TMEM161A) from Homo sapiens (Human).